Consider the following 283-residue polypeptide: uncharacterized protein (283 aa).

This is an uncharacterized protein from Streptomyces coelicolor (strain ATCC BAA-471 / A3(2) / M145).